We begin with the raw amino-acid sequence, 593 residues long: Glutamate decarboxylase 1 (593 aa).

The span at 1-12 (MASSTPSPATSS) shows a compositional bias: low complexity. The segment at 1-22 (MASSTPSPATSSNAGADPNTTN) is disordered. The residue at position 77 (S77) is a Phosphoserine. 189–191 (QLS) is a binding site for 4-aminobutanoate. K404 carries the post-translational modification N6-(pyridoxal phosphate)lysine. R566 lines the 4-aminobutanoate pocket.

The protein belongs to the group II decarboxylase family. As to quaternary structure, homodimer. Requires pyridoxal 5'-phosphate as cofactor.

The catalysed reaction is L-glutamate + H(+) = 4-aminobutanoate + CO2. Its function is as follows. Catalyzes the synthesis of the inhibitory neurotransmitter gamma-aminobutyric acid (GABA) with pyridoxal 5'-phosphate as cofactor. The sequence is that of Glutamate decarboxylase 1 (Gad1) from Mus musculus (Mouse).